The primary structure comprises 238 residues: SH2 domain-containing adapter protein F (238 aa).

Disordered stretches follow at residues M1–W70 and G85–S121. Phosphoserine is present on S39. Residues E55–Q66 are compositionally biased toward acidic residues. The residue at position 64 (Y64) is a Phosphotyrosine. Positions W138–V233 constitute an SH2 domain.

As to quaternary structure, interacts with phosphorylated 'Tyr-720' of PDGFRA via its SH2 domain. In terms of processing, may become phosphorylated upon binding to PDGFRA.

Functionally, adapter protein which may play a role in the regulation of apoptosis in response to PDGF. This is SH2 domain-containing adapter protein F from Mus musculus (Mouse).